The primary structure comprises 59 residues: Salivary thrombin inhibitor XC-43 (59 aa).

The first 23 residues, 1–23, serve as a signal peptide directing secretion; that stretch reads MNLQFLFIFIAFCVMLFAQIVTA.

Interacts with human F2 (thrombin). In terms of tissue distribution, salivary gland (at protein level).

It localises to the secreted. In terms of biological role, anticoagulant protein that acts as a competitive inhibitor of host thrombin. Inhibits thrombin-mediated host platelet aggregation. This Xenopsylla cheopis (Oriental rat flea) protein is Salivary thrombin inhibitor XC-43.